The primary structure comprises 26 residues: GLLQTIKEKLESLESLAKGIVSGIQA.

Position 26 is an alanine amide (Ala-26).

As to expression, expressed by the skin dorsal glands.

Its subcellular location is the secreted. Shows antibacterial activity against S.uberis. The chain is Maculatin-3.1 from Ranoidea genimaculata (Brown-spotted tree frog).